The primary structure comprises 650 residues: DNA mismatch repair protein MutL (650 aa).

Positions 374–420 (SSLPDTQRSQRQPEKAASGQRSSVDAGLSQGSSAHRASQTGLGQSGN) are disordered. Residues 392 to 420 (GQRSSVDAGLSQGSSAHRASQTGLGQSGN) show a composition bias toward polar residues.

Belongs to the DNA mismatch repair MutL/HexB family.

Its function is as follows. This protein is involved in the repair of mismatches in DNA. It is required for dam-dependent methyl-directed DNA mismatch repair. May act as a 'molecular matchmaker', a protein that promotes the formation of a stable complex between two or more DNA-binding proteins in an ATP-dependent manner without itself being part of a final effector complex. This chain is DNA mismatch repair protein MutL, found in Shewanella amazonensis (strain ATCC BAA-1098 / SB2B).